Reading from the N-terminus, the 94-residue chain is uncharacterized protein (94 aa).

An N-terminal signal peptide occupies residues 1 to 22 (MIMKNCLLLGALLMGFTGVAMA).

This is an uncharacterized protein from Escherichia coli (strain K12).